The following is a 242-amino-acid chain: Tyrosine recombinase XerD-like (242 aa).

One can recognise a Core-binding (CB) domain in the interval 1 to 71 (MKEAIDQFIQ…AVNQFLYFLY (71 aa)). Positions 90 to 242 (ENSSQGSLLD…KSITTLEKYR (153 aa)) constitute a Tyr recombinase domain. Active-site residues include K148 and R209. Y241 (O-(3'-phospho-DNA)-tyrosine intermediate) is an active-site residue.

It belongs to the 'phage' integrase family. XerD-like subfamily.

The protein resides in the cytoplasm. Functionally, putative tyrosine recombinase. Not involved in the cutting and rejoining of the recombining DNA molecules on dif(SL) site. The polypeptide is Tyrosine recombinase XerD-like (Streptococcus gordonii (strain Challis / ATCC 35105 / BCRC 15272 / CH1 / DL1 / V288)).